The sequence spans 245 residues: Ubiquinone biosynthesis O-methyltransferase (245 aa).

S-adenosyl-L-methionine-binding residues include Arg49, Gly69, Asp90, and Met134.

It belongs to the methyltransferase superfamily. UbiG/COQ3 family.

The catalysed reaction is a 3-demethylubiquinol + S-adenosyl-L-methionine = a ubiquinol + S-adenosyl-L-homocysteine + H(+). The enzyme catalyses a 3-(all-trans-polyprenyl)benzene-1,2-diol + S-adenosyl-L-methionine = a 2-methoxy-6-(all-trans-polyprenyl)phenol + S-adenosyl-L-homocysteine + H(+). Its pathway is cofactor biosynthesis; ubiquinone biosynthesis. Its function is as follows. O-methyltransferase that catalyzes the 2 O-methylation steps in the ubiquinone biosynthetic pathway. The polypeptide is Ubiquinone biosynthesis O-methyltransferase (Vibrio cholerae serotype O1 (strain ATCC 39541 / Classical Ogawa 395 / O395)).